Reading from the N-terminus, the 505-residue chain is Maturase K (505 aa).

This sequence belongs to the intron maturase 2 family. MatK subfamily.

The protein resides in the plastid. The protein localises to the chloroplast. Its function is as follows. Usually encoded in the trnK tRNA gene intron. Probably assists in splicing its own and other chloroplast group II introns. The protein is Maturase K of Amaranthus greggii (Gregg's amaranth).